The primary structure comprises 663 residues: Protein KINESIN LIGHT CHAIN-RELATED 2 (663 aa).

Residues 1 to 14 (MDVGESNERVKDDS) show a composition bias toward basic and acidic residues. Disordered stretches follow at residues 1-24 (MDVGESNERVKDDSALQASPRSPL) and 86-146 (GESK…KVSV). Position 19 is a phosphoserine (serine 19). Basic and acidic residues predominate over residues 86-100 (GESKKEIILEKKEES). The segment covering 102–111 (GEGSLSQKKP) has biased composition (polar residues). TPR repeat units lie at residues 147-181 (DEESPELGVVLLKQARELVSSGENLNKALDLALRA), 200-233 (VMSLHILAAIYAGLGRYNDAVPVLERSIEIPMIE), 243-276 (FAGCMQLGDMYGLMGQVENSIMLYTAGLEIQRQV), 285-318 (GETCRYLAEAHVQAMQFEEASRLCQMALDIHKEN), 329-363 (AADRKLMGLICDAKGDYEVALEHYVLASMAMSSQN), 369-402 (AAVDCSIGDAYMSLARFDEAIFAYQKALAVFKQG), 411-444 (ALVYVRLADLYNKIGKTRDSKSYCENALKIYLKP), 454-487 (ATGFIEISAIYQSMNELDQALKLLRRALKIYANA), 495-528 (AGIEAQMGVVTYMMGNYSESYDIFKSAISKFRNS), 537-570 (GIALNQMGLACVQRYAINEAADLFEEAKTILEKE), and 579-612 (LAVYSNLAGTYDAMGRLDDAIEILEYVVGTREEK).

The protein belongs to the kinesin light chain family.

This chain is Protein KINESIN LIGHT CHAIN-RELATED 2, found in Arabidopsis thaliana (Mouse-ear cress).